The chain runs to 354 residues: Small ribosomal subunit biogenesis GTPase RsgA (354 aa).

A disordered region spans residues 1-46; sequence MSKKKPLSQGQLRRMRANHEKRLNRDSGDKNTPELQDSSLGPEQSG. The segment covering 17–32 has biased composition (basic and acidic residues); it reads ANHEKRLNRDSGDKNT. Residues 33 to 46 are compositionally biased toward polar residues; it reads PELQDSSLGPEQSG. One can recognise a CP-type G domain in the interval 108–276; the sequence is HSSLSRPDLY…LIDSPGVREF (169 aa). Residues 164–167 and 218–226 each bind GTP; these read NKID and GQSGVGKSS. 4 residues coordinate Zn(2+): Cys-300, Cys-305, His-307, and Cys-313.

This sequence belongs to the TRAFAC class YlqF/YawG GTPase family. RsgA subfamily. In terms of assembly, monomer. Associates with 30S ribosomal subunit, binds 16S rRNA. Zn(2+) is required as a cofactor.

It is found in the cytoplasm. One of several proteins that assist in the late maturation steps of the functional core of the 30S ribosomal subunit. Helps release RbfA from mature subunits. May play a role in the assembly of ribosomal proteins into the subunit. Circularly permuted GTPase that catalyzes slow GTP hydrolysis, GTPase activity is stimulated by the 30S ribosomal subunit. In Shewanella oneidensis (strain ATCC 700550 / JCM 31522 / CIP 106686 / LMG 19005 / NCIMB 14063 / MR-1), this protein is Small ribosomal subunit biogenesis GTPase RsgA.